The chain runs to 314 residues: 4-diphosphocytidyl-2-C-methyl-D-erythritol kinase (314 aa).

K11 is a catalytic residue. Position 99–109 (99–109 (PMAAGLAGGST)) interacts with ATP. D141 is a catalytic residue.

It belongs to the GHMP kinase family. IspE subfamily.

It carries out the reaction 4-CDP-2-C-methyl-D-erythritol + ATP = 4-CDP-2-C-methyl-D-erythritol 2-phosphate + ADP + H(+). It functions in the pathway isoprenoid biosynthesis; isopentenyl diphosphate biosynthesis via DXP pathway; isopentenyl diphosphate from 1-deoxy-D-xylulose 5-phosphate: step 3/6. Catalyzes the phosphorylation of the position 2 hydroxy group of 4-diphosphocytidyl-2C-methyl-D-erythritol. In Trichodesmium erythraeum (strain IMS101), this protein is 4-diphosphocytidyl-2-C-methyl-D-erythritol kinase.